A 170-amino-acid polypeptide reads, in one-letter code: Ubiquitin-conjugating enzyme E2 G1 (170 aa).

Methionine 1 is subject to N-acetylmethionine. Threonine 2 carries the N-acetylthreonine; in Ubiquitin-conjugating enzyme E2 G1, N-terminally processed modification. The UBC core domain maps to 5–166 (QSALLLRRQL…VARCVRKSQE (162 aa)). The active-site Glycyl thioester intermediate is the cysteine 90.

It belongs to the ubiquitin-conjugating enzyme family. Post-translationally, autoubiquitinated in vitro. In terms of tissue distribution, widely expressed, mainly in skeletal muscle.

It carries out the reaction S-ubiquitinyl-[E1 ubiquitin-activating enzyme]-L-cysteine + [E2 ubiquitin-conjugating enzyme]-L-cysteine = [E1 ubiquitin-activating enzyme]-L-cysteine + S-ubiquitinyl-[E2 ubiquitin-conjugating enzyme]-L-cysteine.. The protein operates within protein modification; protein ubiquitination. In terms of biological role, accepts ubiquitin from the E1 complex and catalyzes its covalent attachment to other proteins. In vitro catalyzes 'Lys-48'-, as well as 'Lys-63'-linked polyubiquitination. May be involved in degradation of muscle-specific proteins. Mediates polyubiquitination of CYP3A4. The sequence is that of Ubiquitin-conjugating enzyme E2 G1 (UBE2G1) from Homo sapiens (Human).